We begin with the raw amino-acid sequence, 366 residues long: Adenine DNA glycosylase (366 aa).

30–31 is a binding site for DNA; sequence WR. The active-site Proton donor/acceptor is the glutamate 43. Residues 48-49, 86-88, tyrosine 126, and glutamate 188 contribute to the DNA site; these read QT and LGY. Residues 105 to 133 enclose the HhH domain; the sequence is RYGGKVPDDPDEFSRLKGVGPYTVGAVLS. [4Fe-4S] cluster is bound by residues cysteine 198, cysteine 205, cysteine 208, and cysteine 214. Serine 308 is a binding site for DNA.

The protein belongs to the Nth/MutY family. [4Fe-4S] cluster is required as a cofactor.

The enzyme catalyses Hydrolyzes free adenine bases from 7,8-dihydro-8-oxoguanine:adenine mismatched double-stranded DNA, leaving an apurinic site.. Functionally, base excision repair (BER) glycosylase that initiates repair of A:oxoG to C:G by removing the inappropriately paired adenine base from the DNA backbone, generating an abasic site product. 8-oxoguanine (oxoG) is a genotoxic DNA lesion resulting from oxidation of guanine; this residue is misread by replicative DNA polymerases, that insert adenine instead of cytosine opposite the oxidized damaged base. Shows a powerful dicrimination of A versus C, since it does not cleave cytosine in oxoG:C pairs. May also be able to remove adenine from A:G mispairs, although this activity may not be physiologically relevant. The sequence is that of Adenine DNA glycosylase from Geobacillus stearothermophilus (Bacillus stearothermophilus).